We begin with the raw amino-acid sequence, 149 residues long: Acyl carrier protein 1, chloroplastic (149 aa).

A chloroplast-targeting transit peptide spans 1–59; that stretch reads MAHCLAAVSSFSPSAVRRRLSSQVANVVSSRSSVSFHSRQMSFVSISSRPSSLRFKICC. The Carrier domain occupies 69 to 144; that stretch reads KETVDKVCMI…DAANLIEKLV (76 aa). S104 is modified (O-(pantetheine 4'-phosphoryl)serine).

The protein belongs to the acyl carrier protein (ACP) family. In terms of processing, 4'-phosphopantetheine is transferred from CoA to a specific serine of apo-ACP by acpS. This modification is essential for activity because fatty acids are bound in thioester linkage to the sulfhydryl of the prosthetic group.

Its subcellular location is the plastid. It localises to the chloroplast. The protein operates within lipid metabolism; fatty acid biosynthesis. Its function is as follows. Carrier of the growing fatty acid chain in fatty acid biosynthesis. The chain is Acyl carrier protein 1, chloroplastic (ACL1.1) from Hordeum vulgare (Barley).